A 421-amino-acid chain; its full sequence is D-amino acid dehydrogenase (421 aa).

3 to 17 (VTILGAGVIGVTSAY) contributes to the FAD binding site.

The protein belongs to the DadA oxidoreductase family. FAD serves as cofactor.

It carries out the reaction a D-alpha-amino acid + A + H2O = a 2-oxocarboxylate + AH2 + NH4(+). It functions in the pathway amino-acid degradation; D-alanine degradation; NH(3) and pyruvate from D-alanine: step 1/1. In terms of biological role, oxidative deamination of D-amino acids. The sequence is that of D-amino acid dehydrogenase from Allorhizobium ampelinum (strain ATCC BAA-846 / DSM 112012 / S4) (Agrobacterium vitis (strain S4)).